A 382-amino-acid polypeptide reads, in one-letter code: Galactokinase (382 aa).

Residue 34–37 (EHTD) participates in substrate binding. Position 124–130 (124–130 (GAGLSSS)) interacts with ATP. Positions 130 and 162 each coordinate Mg(2+). Catalysis depends on Asp174, which acts as the Proton acceptor. Residue Tyr223 participates in substrate binding.

The protein belongs to the GHMP kinase family. GalK subfamily.

It is found in the cytoplasm. The catalysed reaction is alpha-D-galactose + ATP = alpha-D-galactose 1-phosphate + ADP + H(+). The protein operates within carbohydrate metabolism; galactose metabolism. In terms of biological role, catalyzes the transfer of the gamma-phosphate of ATP to D-galactose to form alpha-D-galactose-1-phosphate (Gal-1-P). The chain is Galactokinase from Aeromonas hydrophila subsp. hydrophila (strain ATCC 7966 / DSM 30187 / BCRC 13018 / CCUG 14551 / JCM 1027 / KCTC 2358 / NCIMB 9240 / NCTC 8049).